Reading from the N-terminus, the 299-residue chain is Arginase (299 aa).

Mn(2+) is bound by residues His99, Asp122, His124, and Asp126. Residues 124-128 (HGDVN), 135-137 (SGN), and Asp178 contribute to the substrate site. Residues Asp226 and Asp228 each coordinate Mn(2+). Substrate is bound by residues Thr240 and Glu271.

Belongs to the arginase family. In terms of assembly, homohexamer. The cofactor is Mn(2+).

It carries out the reaction L-arginine + H2O = urea + L-ornithine. It participates in nitrogen metabolism; urea cycle; L-ornithine and urea from L-arginine: step 1/1. In terms of biological role, controls arginine catabolism. The polypeptide is Arginase (rocF) (Bacillus caldovelox).